Here is a 727-residue protein sequence, read N- to C-terminus: Catalase-peroxidase (727 aa).

Residues 1-24 are disordered; sequence MDQKSDSAGKCPVAHTAPRGRSNR. Residues 95-217 constitute a cross-link (tryptophyl-tyrosyl-methioninium (Trp-Tyr) (with M-243)); that stretch reads WHSAGTYRIT…LAAVQMGLIY (123 aa). H96 functions as the Proton acceptor in the catalytic mechanism. The segment at residues 217–243 is a cross-link (tryptophyl-tyrosyl-methioninium (Tyr-Met) (with W-95)); sequence YVNPEGPNGNPDPVAAARDIRETFARM. Residue H258 coordinates heme b.

It belongs to the peroxidase family. Peroxidase/catalase subfamily. Homodimer or homotetramer. It depends on heme b as a cofactor. In terms of processing, formation of the three residue Trp-Tyr-Met cross-link is important for the catalase, but not the peroxidase activity of the enzyme.

The catalysed reaction is H2O2 + AH2 = A + 2 H2O. It carries out the reaction 2 H2O2 = O2 + 2 H2O. Functionally, bifunctional enzyme with both catalase and broad-spectrum peroxidase activity. The polypeptide is Catalase-peroxidase (Rhizobium meliloti (strain 1021) (Ensifer meliloti)).